The following is a 102-amino-acid chain: Cytochrome c (102 aa).

Gly1 is modified (N-acetylglycine). Residues 1 to 11 are compositionally biased toward basic and acidic residues; that stretch reads GDAERGKKLFE. Residues 1–26 form a disordered region; it reads GDAERGKKLFESRAGQCHSSQKGVNS. Heme c contacts are provided by Cys17, His18, and Met79. Polar residues predominate over residues 17–26; sequence CHSSQKGVNS. Lys85 is subject to N6,N6,N6-trimethyllysine.

It belongs to the cytochrome c family. In terms of processing, binds 1 heme c group covalently per subunit.

It is found in the mitochondrion intermembrane space. Electron carrier protein. The oxidized form of the cytochrome c heme group can accept an electron from the heme group of the cytochrome c1 subunit of cytochrome reductase. Cytochrome c then transfers this electron to the cytochrome oxidase complex, the final protein carrier in the mitochondrial electron-transport chain. The protein is Cytochrome c of Euglena viridis (Cercaria viridis).